Reading from the N-terminus, the 205-residue chain is Beta-crystallin B2 (205 aa).

Alanine 2 is subject to N-acetylalanine. The tract at residues 2–16 is N-terminal arm; that stretch reads ASDHQTQAGKPQPLN. Beta/gamma crystallin 'Greek key' domains follow at residues 17–56 and 57–101; these read PKII…LVQA and GPWV…RPIK. Positions 102 to 106 are connecting peptide; that stretch reads VDSQE. 2 consecutive Beta/gamma crystallin 'Greek key' domains span residues 107-148 and 149-191; these read HKII…RVQS and GTWV…RRIR. The interval 193–205 is C-terminal arm; that stretch reads MQWHQRGAFHPSN.

This sequence belongs to the beta/gamma-crystallin family. Homo/heterodimer, or complexes of higher-order. The structure of beta-crystallin oligomers seems to be stabilized through interactions between the N-terminal arms.

Functionally, crystallins are the dominant structural components of the vertebrate eye lens. In Canis lupus familiaris (Dog), this protein is Beta-crystallin B2 (CRYBB2).